The chain runs to 365 residues: Aminomethyltransferase (365 aa).

This sequence belongs to the GcvT family. As to quaternary structure, the glycine cleavage system is composed of four proteins: P, T, L and H.

The enzyme catalyses N(6)-[(R)-S(8)-aminomethyldihydrolipoyl]-L-lysyl-[protein] + (6S)-5,6,7,8-tetrahydrofolate = N(6)-[(R)-dihydrolipoyl]-L-lysyl-[protein] + (6R)-5,10-methylene-5,6,7,8-tetrahydrofolate + NH4(+). In terms of biological role, the glycine cleavage system catalyzes the degradation of glycine. In Chlorobaculum parvum (strain DSM 263 / NCIMB 8327) (Chlorobium vibrioforme subsp. thiosulfatophilum), this protein is Aminomethyltransferase.